Consider the following 275-residue polypeptide: 2-C-methyl-D-erythritol 4-phosphate cytidylyltransferase (275 aa).

This sequence belongs to the IspD/TarI cytidylyltransferase family. IspD subfamily.

The enzyme catalyses 2-C-methyl-D-erythritol 4-phosphate + CTP + H(+) = 4-CDP-2-C-methyl-D-erythritol + diphosphate. It functions in the pathway isoprenoid biosynthesis; isopentenyl diphosphate biosynthesis via DXP pathway; isopentenyl diphosphate from 1-deoxy-D-xylulose 5-phosphate: step 2/6. In terms of biological role, catalyzes the formation of 4-diphosphocytidyl-2-C-methyl-D-erythritol from CTP and 2-C-methyl-D-erythritol 4-phosphate (MEP). The sequence is that of 2-C-methyl-D-erythritol 4-phosphate cytidylyltransferase from Corynebacterium jeikeium (strain K411).